Here is a 24-residue protein sequence, read N- to C-terminus: MTPRGFSCLLLPTSETDLPVKRRT.

The protein belongs to the humanin family. As to expression, expressed in skeletal muscle and testis.

It localises to the secreted. The protein resides in the cytoplasm. Plays a role as a neuroprotective and antiapoptotic factor. The sequence is that of Humanin-like 6 from Homo sapiens (Human).